Reading from the N-terminus, the 238-residue chain is Uridylate kinase (238 aa).

12–15 (KVSG) is an ATP binding site. G54 contacts UMP. Positions 55 and 59 each coordinate ATP. Residues D74 and 135–142 (TGNPYFTT) each bind UMP. ATP-binding residues include T162, N163, Y168, and D171.

Belongs to the UMP kinase family. In terms of assembly, homohexamer.

The protein localises to the cytoplasm. The enzyme catalyses UMP + ATP = UDP + ADP. It functions in the pathway pyrimidine metabolism; CTP biosynthesis via de novo pathway; UDP from UMP (UMPK route): step 1/1. Its activity is regulated as follows. Inhibited by UTP. Functionally, catalyzes the reversible phosphorylation of UMP to UDP. The polypeptide is Uridylate kinase (Azorhizobium caulinodans (strain ATCC 43989 / DSM 5975 / JCM 20966 / LMG 6465 / NBRC 14845 / NCIMB 13405 / ORS 571)).